We begin with the raw amino-acid sequence, 398 residues long: Tryptophan synthase beta chain (398 aa).

Residue Lys87 is modified to N6-(pyridoxal phosphate)lysine.

It belongs to the TrpB family. In terms of assembly, tetramer of two alpha and two beta chains. Pyridoxal 5'-phosphate is required as a cofactor.

The catalysed reaction is (1S,2R)-1-C-(indol-3-yl)glycerol 3-phosphate + L-serine = D-glyceraldehyde 3-phosphate + L-tryptophan + H2O. It functions in the pathway amino-acid biosynthesis; L-tryptophan biosynthesis; L-tryptophan from chorismate: step 5/5. The beta subunit is responsible for the synthesis of L-tryptophan from indole and L-serine. In Blochmanniella floridana, this protein is Tryptophan synthase beta chain.